An 86-amino-acid chain; its full sequence is Large ribosomal subunit protein bL31B (86 aa).

It belongs to the bacterial ribosomal protein bL31 family. Type B subfamily. As to quaternary structure, part of the 50S ribosomal subunit.

In Burkholderia cenocepacia (strain ATCC BAA-245 / DSM 16553 / LMG 16656 / NCTC 13227 / J2315 / CF5610) (Burkholderia cepacia (strain J2315)), this protein is Large ribosomal subunit protein bL31B.